Consider the following 666-residue polypeptide: Threonine--tRNA ligase (666 aa).

In terms of domain architecture, TGS spans 1–64 (MSDTVSLTFP…VDGKIEIVTR (64 aa)). The catalytic stretch occupies residues 245-553 (DHRKLGREMD…LIENFAGHMP (309 aa)). Positions 347, 398, and 530 each coordinate Zn(2+).

It belongs to the class-II aminoacyl-tRNA synthetase family. As to quaternary structure, homodimer. It depends on Zn(2+) as a cofactor.

Its subcellular location is the cytoplasm. The enzyme catalyses tRNA(Thr) + L-threonine + ATP = L-threonyl-tRNA(Thr) + AMP + diphosphate + H(+). In terms of biological role, catalyzes the attachment of threonine to tRNA(Thr) in a two-step reaction: L-threonine is first activated by ATP to form Thr-AMP and then transferred to the acceptor end of tRNA(Thr). Also edits incorrectly charged L-seryl-tRNA(Thr). This chain is Threonine--tRNA ligase, found in Allorhizobium ampelinum (strain ATCC BAA-846 / DSM 112012 / S4) (Agrobacterium vitis (strain S4)).